A 576-amino-acid polypeptide reads, in one-letter code: Tudor and KH domain-containing protein homolog (576 aa).

Residues 40–60 are disordered; the sequence is EEADSGGQRPASGIRGQTEEQ. KH domains lie at 65-127 and 136-199; these read EVCL…RALL and VVKV…RKML. The span at 209–224 shows a compositional bias: basic and acidic residues; sequence LVRSMEEVEQRREPRR. The segment at 209–253 is disordered; the sequence is LVRSMEEVEQRREPRRSPTNSIASSMYSSQTSLSSHTQPRDKLMA. Residues 232–243 are compositionally biased toward low complexity; it reads SSMYSSQTSLSS. Residues 310–375 enclose the Tudor domain; it reads APYVGQIVAA…CELRTDFLTL (66 aa). The tract at residues 556–576 is disordered; it reads ATDLENGNNNNASTTNGASAH. Low complexity predominate over residues 561–576; the sequence is NGNNNNASTTNGASAH.

The protein belongs to the Tdrkh family. Interacts (via C-terminus) with AGO3 (via the N-terminal region when symmetrically methylated on arginine residues); this interaction is RNA-independent and may be required for AGO3 localization to the nuage. Interacts (via Tudor domain) with piwi (via N-terminus). Interacts with tral and me31B. As to expression, ovaries (at protein level). Expressed in the ovary and testis.

It localises to the cytoplasm. Its subcellular location is the nucleus. The protein localises to the cytoplasmic ribonucleoprotein granule. In terms of biological role, involved in the piwi-interacting RNA (piRNA) metabolic process, which mediates the repression of transposable elements during meiosis by forming complexes composed of piRNAs and Piwi proteins, and governs the methylation and subsequent repression of transposons which is essential for germline integrity. Likely to act by recruiting Piwi proteins such as AGO3 and piwi to the piRNA biogenesis machinery in the nuage. Required for the final steps of primary piRNA biogenesis by participating in the 3' end-trimming of piwi-bound intermediates into mature piRNAs. This chain is Tudor and KH domain-containing protein homolog, found in Drosophila melanogaster (Fruit fly).